Reading from the N-terminus, the 610-residue chain is Modifier of mdg4 (610 aa).

Residues 1–160 form a self-association region; sequence MADDEQFSLC…QQPRASARYK (160 aa). The tract at residues 1-308 is interaction with Chi; it reads MADDEQFSLC…EEAEYIDLPM (308 aa). The region spanning 32–98 is the BTB domain; that stretch reads VDVSLAAEGQ…MYCGEVNVKQ (67 aa). Disordered stretches follow at residues 115-156, 219-259, 311-339, and 386-432; these read GLTD…PRAS, VSTN…DSTT, PTKS…DDTY, and ESSF…PKPK. The segment covering 122 to 135 has biased composition (pro residues); that stretch reads APQPPQESSPPPAA. The segment covering 136 to 156 has biased composition (low complexity); it reads PHVQQQQIPAQRVQRQQPRAS. Residues 222–238 show a composition bias toward polar residues; sequence NKRSAQRSSLTPASSSA. Ser-230 carries the phosphoserine modification. The span at 312 to 325 shows a compositional bias: basic and acidic residues; the sequence is TKSEPDYSEDHGDA. Residues 386 to 400 show a composition bias toward polar residues; the sequence is ESSFVDTSGDQGNTE. Residues 401–410 show a composition bias toward low complexity; it reads AQAATSASAT. A compositionally biased stretch (basic and acidic residues) spans 422 to 432; sequence TKVEDQTPKPK. An FLYWCH-type zinc finger spans residues 452–512; sequence YASTTKGGVK…VFPYEGEHVH (61 aa). The segment at 551-610 is interaction with su(Hw); it reads LEEADDKEDEDFEEFEIQEIDEIELDEPEKTPAKEEEVDPNDFREKIKRRLQKALQNKKK. Residues 567–577 show a composition bias toward acidic residues; it reads IQEIDEIELDE. Residues 567–595 form a disordered region; that stretch reads IQEIDEIELDEPEKTPAKEEEVDPNDFRE. Basic and acidic residues predominate over residues 578-595; sequence PEKTPAKEEEVDPNDFRE.

As to quaternary structure, can self-associate. Interacts with Chi. Interacts with Top2. Isoform mod2.2: Component of the gypsy chromatin insulator complex, composed of Cp190, mod(mdg4) and su(Hw). The gypsy chromatin insulator complex interacts with Topors via mod(mdg4) and su(Hw). Isoform mod2.2 interacts with Trl/GAGA and interaction with this protein may bypass the repressive effects of the su(Hw) insulator.

Its subcellular location is the nucleus. It is found in the chromosome. Functionally, component of the gypsy chromatin insulator complex which is required for the function of the gypsy chromatin insulator and other endogenous chromatin insulators. Chromatin insulators are regulatory elements which establish independent domains of transcriptional activity within eukaryotic genomes. Insulators have two defining properties; they can block the communication between an enhancer and a promoter when placed between them and can also buffer transgenes from position effect variegation (PEV). Insulators are proposed to structure the chromatin fiber into independent domains of differing transcriptional potential by promoting the formation of distinct chromatin loops. This chromatin looping may involve the formation of insulator bodies, where homotypic interactions between individual subunits of the insulator complex could promote the clustering of widely spaced insulators at the nuclear periphery. Within the gypsy insulator complex, this protein may control the nature of the repressive effect of su(Hw): in the absence of mod(mdg4) protein, su(Hw) exerts a bidirectional silencing effect, whereas in the presence of mod(mdg4), the silencing effect is unidirectional. Isoform H is specifically required to maintain the pairing of achiasmate homologs in male meiosis I which is mediated by the rDNA repeats on the achiasmate X-Y bivalents. Isoform H also plays a role in apoptotic regulatory pathways. This is Modifier of mdg4 from Drosophila melanogaster (Fruit fly).